Reading from the N-terminus, the 695-residue chain is Elongation factor G (695 aa).

The tr-type G domain maps to 8–282 (EKTRNIGIMA…AVLDYLPAPT (275 aa)). GTP-binding positions include 17–24 (AHIDAGKT), 81–85 (DTPGH), and 135–138 (NKMD).

This sequence belongs to the TRAFAC class translation factor GTPase superfamily. Classic translation factor GTPase family. EF-G/EF-2 subfamily.

The protein resides in the cytoplasm. Its function is as follows. Catalyzes the GTP-dependent ribosomal translocation step during translation elongation. During this step, the ribosome changes from the pre-translocational (PRE) to the post-translocational (POST) state as the newly formed A-site-bound peptidyl-tRNA and P-site-bound deacylated tRNA move to the P and E sites, respectively. Catalyzes the coordinated movement of the two tRNA molecules, the mRNA and conformational changes in the ribosome. The chain is Elongation factor G from Listeria innocua serovar 6a (strain ATCC BAA-680 / CLIP 11262).